A 112-amino-acid polypeptide reads, in one-letter code: Large ribosomal subunit protein bL17 (112 aa).

This sequence belongs to the bacterial ribosomal protein bL17 family. Part of the 50S ribosomal subunit. Contacts protein L32.

This Moorella thermoacetica (strain ATCC 39073 / JCM 9320) protein is Large ribosomal subunit protein bL17.